Consider the following 167-residue polypeptide: SAR-endolysin (167 aa).

Residues 11 to 31 (VIAAISGGAIAIASVLITGPG) form a helical; Signal-anchor for type II membrane protein membrane-spanning segment. Catalysis depends on proton donor/acceptor residues E37 and D46.

It belongs to the glycosyl hydrolase 24 family.

The protein localises to the host cell inner membrane. It catalyses the reaction Hydrolysis of (1-&gt;4)-beta-linkages between N-acetylmuramic acid and N-acetyl-D-glucosamine residues in a peptidoglycan and between N-acetyl-D-glucosamine residues in chitodextrins.. Its function is as follows. Signal-arrest-release (SAR) endolysin with lysozyme activity that degrades host peptidoglycans and participates with the pinholin and spanin proteins in the sequential events which lead to programmed host cell lysis releasing the mature viral particles. Once the pinholin has permeabilized the host cell membrane, the SAR-endolysin is released into the periplasm where it breaks down the peptidoglycan layer. The polypeptide is SAR-endolysin (19) (Bacteriophage PS34).